A 108-amino-acid polypeptide reads, in one-letter code: UPF0060 membrane protein SAB2216c (108 aa).

4 helical membrane-spanning segments follow: residues 5–25 (IFIFILAGLCEIGGGYLIWLW), 31–51 (CSLVGLIGGAILMLYGVIATF), 60–80 (VYAAYGGVFIIMSLIFAMVVD), and 86–106 (KYDVIGAIICIVGVLVMLLPS).

Belongs to the UPF0060 family.

It localises to the cell membrane. The chain is UPF0060 membrane protein SAB2216c from Staphylococcus aureus (strain bovine RF122 / ET3-1).